The sequence spans 104 residues: Inclusion membrane protein F (104 aa).

The next 2 helical transmembrane spans lie at 39-59 and 70-90; these read LVVA…SLVA and LAVL…VLFI.

It localises to the secreted. The protein localises to the host vacuole. The protein resides in the host pathogen-containing vacuole. Its subcellular location is the host pathogen-containing vacuole membrane. In terms of biological role, inclusion membrane protein probably involved in early modification events of the chlamydial inclusion. The sequence is that of Inclusion membrane protein F from Chlamydia trachomatis serovar L2 (strain ATCC VR-902B / DSM 19102 / 434/Bu).